A 154-amino-acid chain; its full sequence is Prefoldin subunit 5 (154 aa).

Residue Ala2 is modified to N-acetylalanine. Lys42 carries the post-translational modification N6-acetyllysine. Ser56 is modified (phosphoserine).

It belongs to the prefoldin subunit alpha family. Heterohexamer of two PFD-alpha type and four PFD-beta type subunits. Binds to MYC; interacts with its N-terminal domain. As to expression, highly expressed in pancreas and skeletal muscle and moderately in other tissues.

The protein localises to the nucleus. It is found in the cytoplasm. Its function is as follows. Binds specifically to cytosolic chaperonin (c-CPN) and transfers target proteins to it. Binds to nascent polypeptide chain and promotes folding in an environment in which there are many competing pathways for nonnative proteins. Represses the transcriptional activity of MYC. This chain is Prefoldin subunit 5 (PFDN5), found in Homo sapiens (Human).